We begin with the raw amino-acid sequence, 88 residues long: MANNYRYVEAVRDAEGFIIDGDYAAWDCSRCGHEAQRYRGQSDVDCRNCGACYNASGQRLRDDWRGNPSAWDDEVGDLEGFELQHSDY.

This chain is Gene 86 protein (86), found in Mycobacterium phage D29 (Mycobacteriophage D29).